A 301-amino-acid chain; its full sequence is HTH-type transcriptional regulator MtrA (301 aa).

The HTH araC/xylS-type domain occupies 196-297; it reads KRLGHLIQKV…HVSPGQYRKE (102 aa). DNA-binding regions (H-T-H motif) lie at residues 216–237 and 264–287; these read DKMV…KSQV and VLEV…KRQY.

With respect to regulation, the affinity for the mtrCDE promoter increases 2-fold in the presence of TX-100, a known effector and substrate of the MtrCDE pump. Its function is as follows. Involved in the induction of the mtrCDE-encoded efflux pump. Binds specifically to the mtrCDE promoter region. Required for high-level inducible resistance to the detergent Triton X-100 (TX-100) and the spermicide nonoxynol-9 (N-9). This Neisseria gonorrhoeae protein is HTH-type transcriptional regulator MtrA.